The primary structure comprises 174 residues: Crossover junction endodeoxyribonuclease RuvC (174 aa).

Active-site residues include Asp8, Glu67, and Asp139. 3 residues coordinate Mg(2+): Asp8, Glu67, and Asp139.

The protein belongs to the RuvC family. As to quaternary structure, homodimer which binds Holliday junction (HJ) DNA. The HJ becomes 2-fold symmetrical on binding to RuvC with unstacked arms; it has a different conformation from HJ DNA in complex with RuvA. In the full resolvosome a probable DNA-RuvA(4)-RuvB(12)-RuvC(2) complex forms which resolves the HJ. Mg(2+) is required as a cofactor.

It localises to the cytoplasm. It carries out the reaction Endonucleolytic cleavage at a junction such as a reciprocal single-stranded crossover between two homologous DNA duplexes (Holliday junction).. In terms of biological role, the RuvA-RuvB-RuvC complex processes Holliday junction (HJ) DNA during genetic recombination and DNA repair. Endonuclease that resolves HJ intermediates. Cleaves cruciform DNA by making single-stranded nicks across the HJ at symmetrical positions within the homologous arms, yielding a 5'-phosphate and a 3'-hydroxyl group; requires a central core of homology in the junction. The consensus cleavage sequence is 5'-(A/T)TT(C/G)-3'. Cleavage occurs on the 3'-side of the TT dinucleotide at the point of strand exchange. HJ branch migration catalyzed by RuvA-RuvB allows RuvC to scan DNA until it finds its consensus sequence, where it cleaves and resolves the cruciform DNA. In Pseudoalteromonas translucida (strain TAC 125), this protein is Crossover junction endodeoxyribonuclease RuvC.